The following is a 156-amino-acid chain: N-glycosidase Npun_R5314 (156 aa).

This sequence belongs to the YbiA family.

The catalysed reaction is 2,5-diamino-6-hydroxy-4-(5-phosphoribosylamino)-pyrimidine + H2O = 2,5,6-triamino-4-hydroxypyrimidine + D-ribose 5-phosphate. The enzyme catalyses 5-amino-6-(5-phospho-D-ribosylamino)uracil + H2O = 5,6-diaminouracil + D-ribose 5-phosphate. In terms of biological role, catalyzes the hydrolysis of the N-glycosidic bond in the first two intermediates of riboflavin biosynthesis, which are highly reactive metabolites, yielding relatively innocuous products. Thus, can divert a surplus of harmful intermediates into relatively harmless products and pre-empt the damage these intermediates would otherwise do. May act on other substrates in vivo. Has no activity against GTP, nucleoside monophosphates or ADP-ribose. This Nostoc punctiforme (strain ATCC 29133 / PCC 73102) protein is N-glycosidase Npun_R5314.